The chain runs to 83 residues: Conotoxin MiEr92 (83 aa).

The signal sequence occupies residues 1–22 (MKLTCVLIVIMLFLTVCPLITA). Positions 23–49 (DHSRDKQEHPAMRLKDRIRYLRRGKLT) are excised as a propeptide. 3 disulfide bridges follow: cysteine 52/cysteine 67, cysteine 59/cysteine 72, and cysteine 66/cysteine 81.

Belongs to the conotoxin O1 superfamily. Expressed by the venom duct.

It localises to the secreted. The polypeptide is Conotoxin MiEr92 (Conus miles (Soldier cone)).